A 213-amino-acid polypeptide reads, in one-letter code: High frequency lysogenization protein HflD homolog (213 aa).

Residues 79–126 adopt a coiled-coil conformation; it reads QGLNAELTRYTLSLMVLERKLSSAKGALDTLGNRINGLQRQLEHFDLQ.

The protein belongs to the HflD family.

It localises to the cytoplasm. It is found in the cell inner membrane. This Shigella flexneri serotype 5b (strain 8401) protein is High frequency lysogenization protein HflD homolog.